A 449-amino-acid polypeptide reads, in one-letter code: MFS-type transporter hasB (449 aa).

A run of 12 helical transmembrane segments spans residues 44-64 (VAGS…CGIF), 80-100 (ALAW…PAVG), 112-132 (LPPF…CTKY), 135-155 (VMLA…LPAM), 168-188 (LAVG…PCML), 195-215 (VGFA…LFIA), 255-275 (LPWG…FAPL), 296-316 (AIAN…SDII), 322-342 (MCIV…PLEF), 346-366 (LAGI…FVSL), 387-407 (GGFC…EGAI), and 415-435 (FTGL…CTGT).

The protein belongs to the major facilitator superfamily. Monocarboxylate porter (TC 2.A.1.13) family.

The protein resides in the membrane. Its function is as follows. MFS-type transporter; part of the gene cluster that mediates the biosynthesis of hexadehydro-astechrome (HAS), a tryptophan-derived iron(III)-complex that acts as a virulence factor in infected mice. Required for the production of HAS. In Aspergillus fumigatus (strain CBS 144.89 / FGSC A1163 / CEA10) (Neosartorya fumigata), this protein is MFS-type transporter hasB.